A 74-amino-acid polypeptide reads, in one-letter code: Protein krueppel (74 aa).

4 C2H2-type zinc fingers span residues 1–4 (ERTH), 10–32 (FECP…MRLH), 38–60 (YHCS…LRVH), and 66–74 (YACELCDAR).

This sequence belongs to the krueppel C2H2-type zinc-finger protein family.

The protein resides in the nucleus. In terms of biological role, krueppel is a gap class segmentation protein. The protein is Protein krueppel (Kr) of Psychoda cinerea (Psychod fly).